Consider the following 306-residue polypeptide: Deoxyribokinase (306 aa).

Residues 10–12, 38–42, and E139 contribute to the substrate site; these read MVD and GKGAN. ATP-binding positions include N184 and 220 to 225; that span reads TMGEKG. The K(+) site is built by D246 and S248. 251 to 252 serves as a coordination point for ATP; it reads GD. Residue D252 coordinates substrate. The active-site Proton acceptor is the D252. Residues S282, G285, G287, and S291 each coordinate K(+).

It belongs to the carbohydrate kinase PfkB family. Deoxyribokinase subfamily. Homodimer. It depends on Mg(2+) as a cofactor.

It localises to the cytoplasm. It catalyses the reaction 2-deoxy-D-ribose + ATP = 2-deoxy-D-ribose 5-phosphate + ADP + H(+). Catalyzes the ATP-dependent phosphorylation of 2-deoxy-D-ribose to 2-deoxy-D-ribose 5-phosphate (dRib-5P), allowing the use of deoxyribose as the sole carbon source. Can also use D-ribose, with much lower efficiency. The chain is Deoxyribokinase from Salmonella typhi.